Here is a 341-residue protein sequence, read N- to C-terminus: Anthranilate phosphoribosyltransferase (341 aa).

5-phospho-alpha-D-ribose 1-diphosphate is bound by residues G80, 83–84 (GD), T88, 90–93 (NIST), 108–116 (KHGNRAVSS), and S120. Residue G80 coordinates anthranilate. S92 serves as a coordination point for Mg(2+). An anthranilate-binding site is contributed by N111. Residue R166 coordinates anthranilate. Mg(2+) is bound by residues D225 and E226.

Belongs to the anthranilate phosphoribosyltransferase family. In terms of assembly, homodimer. The cofactor is Mg(2+).

The enzyme catalyses N-(5-phospho-beta-D-ribosyl)anthranilate + diphosphate = 5-phospho-alpha-D-ribose 1-diphosphate + anthranilate. Its pathway is amino-acid biosynthesis; L-tryptophan biosynthesis; L-tryptophan from chorismate: step 2/5. In terms of biological role, catalyzes the transfer of the phosphoribosyl group of 5-phosphorylribose-1-pyrophosphate (PRPP) to anthranilate to yield N-(5'-phosphoribosyl)-anthranilate (PRA). The polypeptide is Anthranilate phosphoribosyltransferase (Priestia megaterium (strain ATCC 12872 / QMB1551) (Bacillus megaterium)).